Here is a 645-residue protein sequence, read N- to C-terminus: 1,4-alpha-glucan branching enzyme GlgB (645 aa).

Asp309 acts as the Nucleophile in catalysis. Residue Glu352 is the Proton donor of the active site. Positions Val619–Arg645 are disordered. Positions Arg636 to Arg645 are enriched in polar residues.

The protein belongs to the glycosyl hydrolase 13 family. GlgB subfamily. In terms of assembly, monomer.

The catalysed reaction is Transfers a segment of a (1-&gt;4)-alpha-D-glucan chain to a primary hydroxy group in a similar glucan chain.. Its pathway is glycan biosynthesis; glycogen biosynthesis. In terms of biological role, catalyzes the formation of the alpha-1,6-glucosidic linkages in glycogen by scission of a 1,4-alpha-linked oligosaccharide from growing alpha-1,4-glucan chains and the subsequent attachment of the oligosaccharide to the alpha-1,6 position. The sequence is that of 1,4-alpha-glucan branching enzyme GlgB from Bacillus cereus (strain ATCC 10987 / NRS 248).